The following is a 232-amino-acid chain: 7-cyano-7-deazaguanine synthase (232 aa).

8–18 (FSGGQDSTTCL) serves as a coordination point for ATP. 4 residues coordinate Zn(2+): Cys187, Cys196, Cys199, and Cys202.

It belongs to the QueC family. The cofactor is Zn(2+).

The enzyme catalyses 7-carboxy-7-deazaguanine + NH4(+) + ATP = 7-cyano-7-deazaguanine + ADP + phosphate + H2O + H(+). It functions in the pathway purine metabolism; 7-cyano-7-deazaguanine biosynthesis. Catalyzes the ATP-dependent conversion of 7-carboxy-7-deazaguanine (CDG) to 7-cyano-7-deazaguanine (preQ(0)). The chain is 7-cyano-7-deazaguanine synthase from Photobacterium profundum (strain SS9).